We begin with the raw amino-acid sequence, 144 residues long: Probable subtilase-type protease inhibitor (144 aa).

Positions 1-34 (MPNTARWAVTLTLTATAVCGPLAGASLATPNAAA) are cleaved as a signal peptide. Cystine bridges form between Cys66–Cys81 and Cys102–Cys132.

It belongs to the protease inhibitor I16 (SSI) family. As to quaternary structure, homodimer.

It is found in the secreted. Functionally, strong inhibitor of bacterial serine proteases such as subtilisin. This is Probable subtilase-type protease inhibitor (sti1) from Streptomyces avermitilis (strain ATCC 31267 / DSM 46492 / JCM 5070 / NBRC 14893 / NCIMB 12804 / NRRL 8165 / MA-4680).